A 272-amino-acid chain; its full sequence is MAVSDADASSVDKVESITLQRVKQSEELLAQLYVVEESPRRMGRGPVQLMLAISVLSLVAFITTLLMRYNAFVTMYEDAQAKRSNFEVMIQRRDNLFGNLVKLTLNHAALEHSIFSHTSDKRKESVEAGKGGPIGSAIEQLMKQGGIGKLLGDGGAGKALLGADGGFGNALGRLMAIVEQYPTVQSADTYKHMMTSLVDMEDRIASKREEFNASAATYNVAITKWPWDYLAMITGFKRVEYFHEKPAGDTPIITPQIFQELLPLTHSQESKN.

Residues 1 to 46 are Cytoplasmic-facing; that stretch reads MAVSDADASSVDKVESITLQRVKQSEELLAQLYVVEESPRRMGRGP. A helical membrane pass occupies residues 47–67; sequence VQLMLAISVLSLVAFITTLLM. At 68–272 the chain is on the lumenal side; the sequence is RYNAFVTMYE…PLTHSQESKN (205 aa).

It belongs to the LemA family.

Its subcellular location is the magnetosome membrane. The protein resides in the cell inner membrane. Essential for magnetosome formation. Not essential for formation of magnetosome membrane vesicles. One of 7 genes (mamLQBIEMO) able to induce magnetosome membrane biogenesis; coexpression of mamLQRBIEMO in a deletion of the 17 gene mamAB operon restores magnetosome vesicle formation but not magnetite biosynthesis. This is Magnetosome protein MamQ from Magnetospirillum gryphiswaldense (strain DSM 6361 / JCM 21280 / NBRC 15271 / MSR-1).